Here is an 85-residue protein sequence, read N- to C-terminus: MLFHIYHLSRFTTANKISGNYAAFCASLTKAETRSDKDAPFSTQALTRSKSKRKRSALPVANGLKKPTRSIKRPSRGERLSATTI.

The segment at 35-85 is disordered; sequence SDKDAPFSTQALTRSKSKRKRSALPVANGLKKPTRSIKRPSRGERLSATTI.

This is an uncharacterized protein from Pasteurella multocida (strain Pm70).